Here is a 313-residue protein sequence, read N- to C-terminus: Recombination-promoting nuclease pSLT051 (313 aa).

It belongs to the Rpn/YhgA-like nuclease family.

Its function is as follows. A low activity DNA endonuclease probably yielding 3'-hydroxyl ends. Involved in RecA-independent recombination and horizontal gene transfer. The protein is Recombination-promoting nuclease pSLT051 of Salmonella typhimurium (strain LT2 / SGSC1412 / ATCC 700720).